The primary structure comprises 490 residues: uncharacterized protein (490 aa).

The first 19 residues, 1 to 19 (MSITSVSLYVYLICAGGHA), serve as a signal peptide directing secretion.

This sequence belongs to the mimivirus L137 family.

This is an uncharacterized protein from Acanthamoeba polyphaga (Amoeba).